A 260-amino-acid polypeptide reads, in one-letter code: Thiamine thiazole synthase (260 aa).

NAD(+) contacts are provided by residues Ala36, 55–56 (EQ), Gly63, and 154–156 (HVD). Fe cation is bound by residues Asp156 and His171. NAD(+) is bound at residue Met224. Position 234 (Arg234) interacts with glycine.

This sequence belongs to the THI4 family. Homooctamer; tetramer of dimers. The cofactor is Fe(2+).

It carries out the reaction hydrogen sulfide + glycine + NAD(+) = ADP-5-ethyl-4-methylthiazole-2-carboxylate + nicotinamide + 3 H2O + H(+). The protein operates within cofactor biosynthesis; thiamine diphosphate biosynthesis. In terms of biological role, involved in the biosynthesis of the thiazole moiety of thiamine. Catalyzes the conversion of NAD and glycine to adenosine diphosphate 5-(2-hydroxyethyl)-4-methylthiazole-2-carboxylate (ADT), an adenylated thiazole intermediate, using free sulfide as a source of sulfur. This chain is Thiamine thiazole synthase, found in Methanosarcina barkeri (strain Fusaro / DSM 804).